The following is a 624-amino-acid chain: DNA-directed RNA polymerase subunit gamma (624 aa).

Zn(2+) is bound by residues cysteine 70, cysteine 72, cysteine 85, and cysteine 88. Positions 466, 468, and 470 each coordinate Mg(2+).

This sequence belongs to the RNA polymerase beta' chain family. RpoC1 subfamily. In terms of assembly, in cyanobacteria the RNAP catalytic core is composed of 2 alpha, 1 beta, 1 beta', 1 gamma and 1 omega subunit. When a sigma factor is associated with the core the holoenzyme is formed, which can initiate transcription. Mg(2+) is required as a cofactor. Requires Zn(2+) as cofactor.

The enzyme catalyses RNA(n) + a ribonucleoside 5'-triphosphate = RNA(n+1) + diphosphate. DNA-dependent RNA polymerase catalyzes the transcription of DNA into RNA using the four ribonucleoside triphosphates as substrates. The protein is DNA-directed RNA polymerase subunit gamma of Synechococcus elongatus (strain ATCC 33912 / PCC 7942 / FACHB-805) (Anacystis nidulans R2).